We begin with the raw amino-acid sequence, 210 residues long: Actin-related protein 3C (210 aa).

The signal sequence occupies residues M1–A21.

This sequence belongs to the actin family. Expressed in kidney, stomach, spleen, bone marrow, uterus, testis, placenta, skeletal muscle, mammary gland, lung, fetal liver, and fetal kidney, but not detected in small intestine, brain, and thymus. Expressed in low-metastatic lung adenocarcinoma cells but not in high-metastatic ones.

Its function is as follows. May play a role in the suppression of metastatic potential in lung adenoma carcinoma cells. The protein is Actin-related protein 3C (ACTR3C) of Homo sapiens (Human).